A 369-amino-acid chain; its full sequence is Flagellar P-ring protein (369 aa).

A signal peptide spans 1–24 (MSKTISLLKFIICILISLCSFTYA).

It belongs to the FlgI family. As to quaternary structure, the basal body constitutes a major portion of the flagellar organelle and consists of four rings (L,P,S, and M) mounted on a central rod.

It localises to the bacterial flagellum basal body. In terms of biological role, assembles around the rod to form the L-ring and probably protects the motor/basal body from shearing forces during rotation. The protein is Flagellar P-ring protein of Buchnera aphidicola subsp. Schizaphis graminum (strain Sg).